The sequence spans 140 residues: Nucleoside diphosphate kinase (140 aa).

6 residues coordinate ATP: Lys-11, Phe-59, Arg-87, Thr-93, Arg-104, and Asn-114. His-117 (pros-phosphohistidine intermediate) is an active-site residue.

It belongs to the NDK family. As to quaternary structure, homotetramer. Mg(2+) is required as a cofactor.

It is found in the cytoplasm. The enzyme catalyses a 2'-deoxyribonucleoside 5'-diphosphate + ATP = a 2'-deoxyribonucleoside 5'-triphosphate + ADP. The catalysed reaction is a ribonucleoside 5'-diphosphate + ATP = a ribonucleoside 5'-triphosphate + ADP. Functionally, major role in the synthesis of nucleoside triphosphates other than ATP. The ATP gamma phosphate is transferred to the NDP beta phosphate via a ping-pong mechanism, using a phosphorylated active-site intermediate. This Agrobacterium fabrum (strain C58 / ATCC 33970) (Agrobacterium tumefaciens (strain C58)) protein is Nucleoside diphosphate kinase.